Reading from the N-terminus, the 242-residue chain is Small ribosomal subunit protein uS3 (242 aa).

A KH type-2 domain is found at 39-109; sequence IRQYVKATLA…QIRINVVEVT (71 aa). The tract at residues 220 to 242 is disordered; that stretch reads KVNQPKRRQQKRRQQYDDRSNEG. Residues 223 to 232 are compositionally biased toward basic residues; the sequence is QPKRRQQKRR. Basic and acidic residues predominate over residues 233 to 242; that stretch reads QQYDDRSNEG.

The protein belongs to the universal ribosomal protein uS3 family. Part of the 30S ribosomal subunit. Forms a tight complex with proteins S10 and S14.

Functionally, binds the lower part of the 30S subunit head. Binds mRNA in the 70S ribosome, positioning it for translation. This chain is Small ribosomal subunit protein uS3, found in Trichodesmium erythraeum (strain IMS101).